The following is a 512-amino-acid chain: Tyrosine-protein kinase Lyn (512 aa).

The disordered stretch occupies residues 1-50 (MGCIKSKRKDNLNDDGVDMKTQPVRNTDRTIYVRDPTSNKQQRPVPESQL). Gly2 carries the N-myristoyl glycine lipid modification. Cys3 carries the S-palmitoyl cysteine lipid modification. The SH3 domain maps to 63 to 123 (EQGDIVVALY…PSNYVAKVNT (61 aa)). Residues 129–226 (WFFKDITRKD…GLCRRLEKAC (98 aa)) enclose the SH2 domain. Tyr193 carries the phosphotyrosine modification. A Phosphoserine modification is found at Ser228. One can recognise a Protein kinase domain in the interval 247 to 501 (IKLVKKLGAG…YLQSVLDDFY (255 aa)). Residues 253–261 (LGAGQFGEV) and Lys275 each bind ATP. Phosphotyrosine is present on residues Tyr306 and Tyr316. The active-site Proton acceptor is Asp367. Tyr397 carries the post-translational modification Phosphotyrosine; by autocatalysis. Phosphotyrosine occurs at positions 460 and 473. Residue Tyr508 is modified to Phosphotyrosine; by autocatalysis, CSK and MATK.

This sequence belongs to the protein kinase superfamily. Tyr protein kinase family. SRC subfamily. In terms of assembly, interacts with TEC. Interacts (via SH2 domain) with FLT3 (tyrosine phosphorylated). Interacts with LIME1 and with CD79A upon activation of the B-cell antigen receptor. Interacts with the B-cell receptor complex. Interacts with phosphorylated THEMIS2. Interacts with EPOR. Interacts with MS4A2/FCER1B. Interaction (via the SH2 and SH3 domains) with MUC1 is stimulated by IL7 and the subsequent phosphorylation increases the binding between MUC1 and CTNNB1/beta-catenin. Interacts with ADAM15. Interacts with NDFIP2 and more weakly with NDFIP1. Interacts with FASLG. Interacts with KIT. Interacts with HCLS1. Interacts with FCGR2B. Interacts with FCGR1A; the interaction may be indirect. Interacts with CD19, CD22, CD79A and CD79B. Interacts (via SH3 domain) with CBLC, PPP1R15A and PDE4A. Interacts with TGFB1I1. Interacts (via SH3 domain) with PIK3R1, the regulatory subunit of phosphatidylinositol 3-kinase; this interaction enhances phosphatidylinositol 3-kinase activity. Interacts with CSF2RB, the common subunit of the IL3, IL5 and CSF2 receptors. Interacts with PAG1; identified in a complex with PAG1 and STAT3. Interacts with ABL1. Interacts with PTPN6/SHP-1. Interacts (via SH3 domain) with SCIMP (via proline-rich region). This interaction facilitates the phosphorylation of SCIMP 'Tyr-96', which enhances binding of SCIMP to TLR4, and consequently the phosphorylation of TLR4 in response to stimulation by lipopolysaccharide in macrophages. Interacts with LPXN (via LD motif 3) and the interaction is induced upon B-cell antigen receptor (BCR) activation. Interacts (via SH3-domain) with ANKRD54 (via ankyrin repeat region) in an activation-independent status of LYN. Forms a multiprotein complex with ANKRD54 and HCLS1. Interacts (via SH2 and SH3 domains) with UNC119; leading to LYN activation. Interacts with CD36. Interacts with LYN. Interacts with SKAP1 and FYB1; this interaction promotes the phosphorylation of CLNK. Interacts with BCAR1/CAS and NEDD9/HEF1. Ubiquitinated. Ubiquitination is SH3-dependent. Post-translationally, autophosphorylated. Phosphorylated on tyrosine residues in response to KIT signaling. Phosphorylation at Tyr-397 is required for optimal activity. Phosphorylation at Tyr-508 inhibits kinase activity. Phosphorylated at Tyr-508 by CSK. Dephosphorylated by PTPRC/CD45. Becomes rapidly phosphorylated upon activation of the B-cell receptor and the immunoglobulin receptor FCGR1A. Phosphorylated in response to integrin ITGB1 in B-cells. Detected in spleen (at protein level). Expressed predominantly in B-lymphoid and myeloid cells.

It is found in the cell membrane. The protein localises to the nucleus. It localises to the cytoplasm. The protein resides in the perinuclear region. Its subcellular location is the golgi apparatus. It is found in the membrane. The enzyme catalyses L-tyrosyl-[protein] + ATP = O-phospho-L-tyrosyl-[protein] + ADP + H(+). With respect to regulation, subject to autoinhibition, mediated by intramolecular interactions between the SH2 domain and the C-terminal phosphotyrosine. Phosphorylation at Tyr-397 is required for optimal activity. Phosphorylated by CSK at Tyr-508; phosphorylation at Tyr-508 inhibits kinase activity. Kinase activity is modulated by dephosphorylation by PTPRC/CD45. Functionally, non-receptor tyrosine-protein kinase that transmits signals from cell surface receptors and plays an important role in the regulation of innate and adaptive immune responses, hematopoiesis, responses to growth factors and cytokines, integrin signaling, but also responses to DNA damage and genotoxic agents. Functions primarily as negative regulator, but can also function as activator, depending on the context. Required for the initiation of the B-cell response, but also for its down-regulation and termination. Plays an important role in the regulation of B-cell differentiation, proliferation, survival and apoptosis, and is important for immune self-tolerance. Acts downstream of several immune receptors, including the B-cell receptor, CD79A, CD79B, CD5, CD19, CD22, FCER1, FCGR2, FCGR1A, TLR2 and TLR4. Plays a role in the inflammatory response to bacterial lipopolysaccharide. Mediates the responses to cytokines and growth factors in hematopoietic progenitors, platelets, erythrocytes, and in mature myeloid cells, such as dendritic cells, neutrophils and eosinophils. Acts downstream of EPOR, KIT, MPL, the chemokine receptor CXCR4, as well as the receptors for IL3, IL5 and CSF2. Plays an important role in integrin signaling. Regulates cell proliferation, survival, differentiation, migration, adhesion, degranulation, and cytokine release. Involved in the regulation of endothelial activation, neutrophil adhesion and transendothelial migration. Down-regulates signaling pathways by phosphorylation of immunoreceptor tyrosine-based inhibitory motifs (ITIM), that then serve as binding sites for phosphatases, such as PTPN6/SHP-1, PTPN11/SHP-2 and INPP5D/SHIP-1, that modulate signaling by dephosphorylation of kinases and their substrates. Phosphorylates LIME1 in response to CD22 activation. Phosphorylates BTK, CBL, CD5, CD19, CD72, CD79A, CD79B, CSF2RB, DOK1, HCLS1, LILRB3/PIR-B, MS4A2/FCER1B, SYK and TEC. Promotes phosphorylation of SIRPA, PTPN6/SHP-1, PTPN11/SHP-2 and INPP5D/SHIP-1. Required for rapid phosphorylation of FER in response to FCER1 activation. Mediates KIT phosphorylation. Acts as an effector of EPOR (erythropoietin receptor) in controlling KIT expression and may play a role in erythroid differentiation during the switch between proliferation and maturation. Depending on the context, activates or inhibits several signaling cascades. Regulates phosphatidylinositol 3-kinase activity and AKT1 activation. Regulates activation of the MAP kinase signaling cascade, including activation of MAP2K1/MEK1, MAPK1/ERK2, MAPK3/ERK1, MAPK8/JNK1 and MAPK9/JNK2. Mediates activation of STAT5A and/or STAT5B. Phosphorylates LPXN on 'Tyr-72'. Kinase activity facilitates TLR4-TLR6 heterodimerization and signal initiation. Phosphorylates SCIMP on 'Tyr-96'; this enhances binding of SCIMP to TLR4, promoting the phosphorylation of TLR4, and a selective cytokine response to lipopolysaccharide in macrophages. Phosphorylates CLNK. Phosphorylates BCAR1/CAS and NEDD9/HEF1. This chain is Tyrosine-protein kinase Lyn (Lyn), found in Rattus norvegicus (Rat).